Reading from the N-terminus, the 387-residue chain is MGVSANLFVKQRGSTTALKQPKEIGFYSRTKDEEYLISDDTNLNYYYLPDAELDRKLDLSSGFQKFKDYYKDFEDRCSLRGLLETIESSERHKGKKINADIITFRGIARKLISCAFDSPSFNTVDLRIVSFNGQLFIKEVPEAVNAAKASSATEAGRNINQDLNVFTGYKFETLATLSNPLQYTPREVIEKRTKRIVSHGDEYISVVRTGVGNCKLILGAEVDCIFDFKENGRDNLKHYAELKCTQQVANISDTHKFERKLFRTWLQCFLVGIPRIIYGFKDDHYVLKTVEEFSTEEVPVLLKNNNPQVGSACLEAIKWYGLLTEWLLKMIPRDEDPHSQIRAFKLVFENNHLRLSEIEESDEEYSGLIDGEHILSNGFKEWRKSLK.

Glu172 lines the a divalent metal cation pocket. A Phosphoserine modification is found at Ser198. Substrate is bound at residue Glu221. Residues Asp223, Glu241, and Leu242 each coordinate a divalent metal cation. The substrate site is built by Lys243 and Gln267. Residues 273–387 (IPRIIYGFKD…GFKEWRKSLK (115 aa)) are interaction with RAT1.

Belongs to the DXO/Dom3Z family. As to quaternary structure, interacts with RAT1, RTT103 and pre-60S ribosomal subunits. Interacts with RAT1; the interaction is direct, stabilizes RAT1 protein structure and stimulates its exoribonuclease activity. The interaction also stimulates RAI1 pyrophosphohydrolase activity, probably by recruiting it to mRNA substrates. A divalent metal cation is required as a cofactor.

It localises to the nucleus. It catalyses the reaction a 5'-end NAD(+)-phospho-ribonucleoside in mRNA + H2O = a 5'-end phospho-ribonucleoside in mRNA + NAD(+) + H(+). The catalysed reaction is a 5'-end (N(7)-methyl 5'-triphosphoguanosine)-ribonucleoside-ribonucleotide in mRNA + H2O = a (N(7)-methyl 5'-triphosphoguanosine)-nucleoside + a 5'-end phospho-ribonucleoside in mRNA + H(+). It carries out the reaction a 5'-end triphospho-ribonucleoside in mRNA + H2O = a 5'-end phospho-ribonucleoside in mRNA + diphosphate + H(+). Its function is as follows. Decapping enzyme for NAD-capped RNAs: specifically hydrolyzes the nicotinamide adenine dinucleotide (NAD) cap from a subset of RNAs by removing the entire NAD moiety from the 5'-end of an NAD-capped RNA. The NAD-cap is present at the 5'-end of some RNAs and snoRNAs. In contrast to the canonical 5'-end N7 methylguanosine (m7G) cap, the NAD cap promotes mRNA decay. Also acts as a non-canonical decapping enzyme that removes the entire cap structure of m7G capped or incompletely capped RNAs. Has decapping activity toward incomplete 5'-end m7G cap mRNAs such as unmethylated 5'-end-capped RNA (cap0), while it has no activity toward 2'-O-ribose methylated m7G cap (cap1). Also possesses RNA 5'-pyrophosphohydrolase activity by hydrolyzing the 5'-end triphosphate to release pyrophosphates. Stimulates exoribonuclease activity of RAT1, allowing it to degrade RNAs with stable secondary structure more effectively. Required for the processing of nuclear mRNA and rRNA precursors. May promote termination of transcription by RNA polymerase II. This chain is Decapping nuclease RAI1, found in Saccharomyces cerevisiae (strain ATCC 204508 / S288c) (Baker's yeast).